Consider the following 186-residue polypeptide: Peptidyl-tRNA hydrolase (186 aa).

Tyr17 is a binding site for tRNA. His22 functions as the Proton acceptor in the catalytic mechanism. The tRNA site is built by Tyr64 and Asn66.

The protein belongs to the PTH family. As to quaternary structure, monomer.

Its subcellular location is the cytoplasm. It carries out the reaction an N-acyl-L-alpha-aminoacyl-tRNA + H2O = an N-acyl-L-amino acid + a tRNA + H(+). Its function is as follows. Hydrolyzes ribosome-free peptidyl-tRNAs (with 1 or more amino acids incorporated), which drop off the ribosome during protein synthesis, or as a result of ribosome stalling. Functionally, catalyzes the release of premature peptidyl moieties from peptidyl-tRNA molecules trapped in stalled 50S ribosomal subunits, and thus maintains levels of free tRNAs and 50S ribosomes. The polypeptide is Peptidyl-tRNA hydrolase (Methylacidiphilum infernorum (isolate V4) (Methylokorus infernorum (strain V4))).